Reading from the N-terminus, the 526-residue chain is Peptide chain release factor 3 (526 aa).

In terms of domain architecture, tr-type G spans 9-277; it reads DKRRTFAIIS…GIVEWAPKPL (269 aa). Residues 18–25, 86–90, and 140–143 each bind GTP; these read SHPDAGKT, DTPGH, and NKLD.

It belongs to the TRAFAC class translation factor GTPase superfamily. Classic translation factor GTPase family. PrfC subfamily.

It is found in the cytoplasm. Increases the formation of ribosomal termination complexes and stimulates activities of RF-1 and RF-2. It binds guanine nucleotides and has strong preference for UGA stop codons. It may interact directly with the ribosome. The stimulation of RF-1 and RF-2 is significantly reduced by GTP and GDP, but not by GMP. The protein is Peptide chain release factor 3 of Shewanella putrefaciens (strain CN-32 / ATCC BAA-453).